Reading from the N-terminus, the 363-residue chain is MSNKKIIFFTGGGTGGHVFPGISIIQKLKEFDNEIEFFWIGKKNSIEEKLIKEQDNIKFISIPCGKLRRYFSFKNFTDFFKVILGIIKSFYVLKKYKPQLIYATGGFVSTPAIIASSLLKIKSITHEMDLDPGLATKINSKFANNIHISFKESEKYFKNYKNIIYTGSPIRREFLNPDPKIIKQLTQNTNKPIISILGGSLGANALNNLALCIKKDAEIYFIHQSGKNLNDLSEKNYLRRQFFNAEEMASIVKFSNLIISRAGAGAIKEFANAGACAILIPFKKGSRGDQIKNAKLLTNQNACIYIDEDEILNINILKIIKKTLKDREKINSLKENIKKFNNKHSSTLIAKLLIKDIKETKSK.

UDP-N-acetyl-alpha-D-glucosamine-binding positions include 14–16 (TGG), R171, S200, and Q290.

It belongs to the glycosyltransferase 28 family. MurG subfamily.

The protein resides in the cell inner membrane. The enzyme catalyses di-trans,octa-cis-undecaprenyl diphospho-N-acetyl-alpha-D-muramoyl-L-alanyl-D-glutamyl-meso-2,6-diaminopimeloyl-D-alanyl-D-alanine + UDP-N-acetyl-alpha-D-glucosamine = di-trans,octa-cis-undecaprenyl diphospho-[N-acetyl-alpha-D-glucosaminyl-(1-&gt;4)]-N-acetyl-alpha-D-muramoyl-L-alanyl-D-glutamyl-meso-2,6-diaminopimeloyl-D-alanyl-D-alanine + UDP + H(+). The protein operates within cell wall biogenesis; peptidoglycan biosynthesis. Cell wall formation. Catalyzes the transfer of a GlcNAc subunit on undecaprenyl-pyrophosphoryl-MurNAc-pentapeptide (lipid intermediate I) to form undecaprenyl-pyrophosphoryl-MurNAc-(pentapeptide)GlcNAc (lipid intermediate II). In Borreliella burgdorferi (strain ATCC 35210 / DSM 4680 / CIP 102532 / B31) (Borrelia burgdorferi), this protein is UDP-N-acetylglucosamine--N-acetylmuramyl-(pentapeptide) pyrophosphoryl-undecaprenol N-acetylglucosamine transferase.